We begin with the raw amino-acid sequence, 1077 residues long: Serine/threonine-protein kinase sel-5 (1077 aa).

The Protein kinase domain occupies 47–317 (VTIEKQIAEG…IYQTSVLAFE (271 aa)). ATP-binding positions include 53-61 (IAEGGFAIV) and Lys-75. The active-site Proton acceptor is the Asp-178. Disordered regions lie at residues 347–444 (MRDG…TDGS), 488–554 (GFTD…SQVV), 616–813 (ELDS…TNPF), and 920–1077 (LISV…PTDL). A compositionally biased stretch (polar residues) spans 369–399 (IQSSSKMASLSQQVPSISNISMPSGSGTVET). Over residues 491 to 515 (DLDKPALPRDRAQTDGKRRLPHESD) the composition is skewed to basic and acidic residues. The segment covering 541–554 (SSQQTTSKTSSQVV) has biased composition (low complexity). Residues 638 to 648 (LTVSTSSSAQP) show a composition bias toward polar residues. Over residues 655-679 (TDEDDERQLLSETDEEEKYEIDEKE) the composition is skewed to acidic residues. Composition is skewed to basic and acidic residues over residues 697–708 (DEQRMNDRRRYS) and 739–751 (DSRR…HDED). Residues 770-780 (EDDGLEDDDDH) show a composition bias toward acidic residues. Polar residues predominate over residues 799–810 (GTSTPHTQNPIT). The segment covering 927 to 936 (TDPPPPPLPK) has biased composition (pro residues). Residues 941-950 (ASPTQETTAT) show a composition bias toward polar residues. Residues 960 to 969 (KLLKKEKKKE) are compositionally biased toward basic residues. Residues 970-989 (KKDGKKDKLKLEEYREKGSS) are compositionally biased toward basic and acidic residues. Positions 1054 to 1067 (LTGKNASFVNTSFQ) are enriched in polar residues.

The protein belongs to the protein kinase superfamily. Ser/Thr protein kinase family. Mg(2+) is required as a cofactor.

It localises to the cytoplasm. The enzyme catalyses L-seryl-[protein] + ATP = O-phospho-L-seryl-[protein] + ADP + H(+). It catalyses the reaction L-threonyl-[protein] + ATP = O-phospho-L-threonyl-[protein] + ADP + H(+). In terms of biological role, serine/threonine-protein kinase which may play a role in lin-12-mediated cell-fate decisions. This chain is Serine/threonine-protein kinase sel-5, found in Caenorhabditis elegans.